The chain runs to 168 residues: MGYLGMPFRVGMGFDVHRFTESREEGQYIPICGIKVAHTQGIVAHSDGDVALHALTDALLGCMGEGSIGQHFPNSDPQWKNASSSYFLLEAQKKAAAKSYAILNFDVTIVCEQPKIMPHVPKMKEFLSKLLDVDVSQMNIKAVTTEKLGFLGRGEGIAAHAVLMCYRV.

Residues aspartate 15 and histidine 17 each coordinate a divalent metal cation. 4-CDP-2-C-methyl-D-erythritol 2-phosphate-binding positions include 15-17 (DVH) and 45-46 (HS). Position 53 (histidine 53) interacts with a divalent metal cation. 4-CDP-2-C-methyl-D-erythritol 2-phosphate-binding positions include 72 to 76 (FPNSD), phenylalanine 150, and arginine 153.

It belongs to the IspF family. Homotrimer. Requires a divalent metal cation as cofactor.

It catalyses the reaction 4-CDP-2-C-methyl-D-erythritol 2-phosphate = 2-C-methyl-D-erythritol 2,4-cyclic diphosphate + CMP. It participates in isoprenoid biosynthesis; isopentenyl diphosphate biosynthesis via DXP pathway; isopentenyl diphosphate from 1-deoxy-D-xylulose 5-phosphate: step 4/6. Involved in the biosynthesis of isopentenyl diphosphate (IPP) and dimethylallyl diphosphate (DMAPP), two major building blocks of isoprenoid compounds. Catalyzes the conversion of 4-diphosphocytidyl-2-C-methyl-D-erythritol 2-phosphate (CDP-ME2P) to 2-C-methyl-D-erythritol 2,4-cyclodiphosphate (ME-CPP) with a corresponding release of cytidine 5-monophosphate (CMP). The chain is 2-C-methyl-D-erythritol 2,4-cyclodiphosphate synthase from Anaplasma phagocytophilum (strain HZ).